We begin with the raw amino-acid sequence, 117 residues long: Ribosomal silencing factor RsfS (117 aa).

This sequence belongs to the Iojap/RsfS family. Interacts with ribosomal protein uL14 (rplN).

The protein localises to the cytoplasm. Functions as a ribosomal silencing factor. Interacts with ribosomal protein uL14 (rplN), blocking formation of intersubunit bridge B8. Prevents association of the 30S and 50S ribosomal subunits and the formation of functional ribosomes, thus repressing translation. In Halalkalibacterium halodurans (strain ATCC BAA-125 / DSM 18197 / FERM 7344 / JCM 9153 / C-125) (Bacillus halodurans), this protein is Ribosomal silencing factor RsfS.